A 145-amino-acid polypeptide reads, in one-letter code: D-aminoacyl-tRNA deacylase (145 aa).

Residues 137–138 carry the Gly-cisPro motif, important for rejection of L-amino acids motif; it reads GP.

This sequence belongs to the DTD family. In terms of assembly, homodimer.

It localises to the cytoplasm. The catalysed reaction is glycyl-tRNA(Ala) + H2O = tRNA(Ala) + glycine + H(+). The enzyme catalyses a D-aminoacyl-tRNA + H2O = a tRNA + a D-alpha-amino acid + H(+). An aminoacyl-tRNA editing enzyme that deacylates mischarged D-aminoacyl-tRNAs. Also deacylates mischarged glycyl-tRNA(Ala), protecting cells against glycine mischarging by AlaRS. Acts via tRNA-based rather than protein-based catalysis; rejects L-amino acids rather than detecting D-amino acids in the active site. By recycling D-aminoacyl-tRNA to D-amino acids and free tRNA molecules, this enzyme counteracts the toxicity associated with the formation of D-aminoacyl-tRNA entities in vivo and helps enforce protein L-homochirality. The polypeptide is D-aminoacyl-tRNA deacylase (Rhodococcus jostii (strain RHA1)).